The sequence spans 361 residues: Putative F-box protein At3g25460 (361 aa).

The region spanning 1-45 (MMMPELPEDLLVEILCRVPATSLKRLRSTCKLWNHLYNDKRFKSK) is the F-box domain.

The chain is Putative F-box protein At3g25460 from Arabidopsis thaliana (Mouse-ear cress).